We begin with the raw amino-acid sequence, 107 residues long: Thioredoxin (107 aa).

One can recognise a Thioredoxin domain in the interval A2 to R107. The cysteines at positions 33 and 36 are disulfide-linked.

The protein belongs to the thioredoxin family.

Functionally, component of the thioredoxin-thioredoxin reductase system. Participates in various redox reactions through the reversible oxidation of its active center dithiol to a disulfide and catalyzes dithiol-disulfide exchange reactions. The sequence is that of Thioredoxin (trxA) from Streptomyces clavuligerus.